The sequence spans 549 residues: ATP synthase subunit alpha (549 aa).

An ATP-binding site is contributed by 172–179 (GDRKTGKT). The segment at 513-549 (SSTGESVVPDEHVEAMDEEDLGKESVKVKKPAPQKKK) is disordered. Over residues 540–549 (VKKPAPQKKK) the composition is skewed to basic residues.

This sequence belongs to the ATPase alpha/beta chains family. F-type ATPases have 2 components, CF(1) - the catalytic core - and CF(0) - the membrane proton channel. CF(1) has five subunits: alpha(3), beta(3), gamma(1), delta(1), epsilon(1). CF(0) has three main subunits: a(1), b(2) and c(9-12). The alpha and beta chains form an alternating ring which encloses part of the gamma chain. CF(1) is attached to CF(0) by a central stalk formed by the gamma and epsilon chains, while a peripheral stalk is formed by the delta and b chains.

The protein resides in the cell membrane. It carries out the reaction ATP + H2O + 4 H(+)(in) = ADP + phosphate + 5 H(+)(out). In terms of biological role, produces ATP from ADP in the presence of a proton gradient across the membrane. The alpha chain is a regulatory subunit. This is ATP synthase subunit alpha from Mycobacterium ulcerans (strain Agy99).